The sequence spans 429 residues: UDP-N-acetylglucosamine 1-carboxyvinyltransferase (429 aa).

22-23 (KN) lines the phosphoenolpyruvate pocket. Residue Arg-102 coordinates UDP-N-acetyl-alpha-D-glucosamine. Cys-126 (proton donor) is an active-site residue. At Cys-126 the chain carries 2-(S-cysteinyl)pyruvic acid O-phosphothioketal. UDP-N-acetyl-alpha-D-glucosamine-binding positions include 131-135 (RPVDL), Asp-316, and Ile-338.

Belongs to the EPSP synthase family. MurA subfamily.

It localises to the cytoplasm. The enzyme catalyses phosphoenolpyruvate + UDP-N-acetyl-alpha-D-glucosamine = UDP-N-acetyl-3-O-(1-carboxyvinyl)-alpha-D-glucosamine + phosphate. It functions in the pathway cell wall biogenesis; peptidoglycan biosynthesis. In terms of biological role, cell wall formation. Adds enolpyruvyl to UDP-N-acetylglucosamine. The sequence is that of UDP-N-acetylglucosamine 1-carboxyvinyltransferase from Methylobacterium radiotolerans (strain ATCC 27329 / DSM 1819 / JCM 2831 / NBRC 15690 / NCIMB 10815 / 0-1).